Consider the following 798-residue polypeptide: Iron-regulated transcriptional activator AFT2 (798 aa).

Disordered regions lie at residues 142–274 (RSNK…KKLK), 331–365 (YPQP…QENN), 449–545 (NVDL…LPGS), 642–718 (QQQQ…NNIN), and 748–798 (QGNP…GPGW). Positions 153 to 165 (EIANTPSVTSYSP) are enriched in polar residues. The segment covering 193 to 223 (STQSTRSSSSSDGSSIVSFGSLTSQSSSTSL) has biased composition (low complexity). Basic residues predominate over residues 256–274 (PVKRKNMKANTMKKSKKLK). A compositionally biased stretch (polar residues) spans 449–460 (NVDLEQNGSNEN). Over residues 476-517 (ENQFSYQSQIQNQRQNQNQNQGQNQNQNQSQSQTPGQNSNQN) the composition is skewed to low complexity. Composition is skewed to polar residues over residues 518–543 (DSQT…NWLP) and 646–656 (PMFSMQNSGQQ). Low complexity-rich tracts occupy residues 657 to 695 (LPPL…TLNP) and 705 to 718 (NSTN…NNIN). Over residues 748–773 (QGNPTNSNQSMVNSIMTTNSNKDGTA) the composition is skewed to polar residues. Low complexity predominate over residues 774 to 789 (TSNNNSSGNTSNNLLN).

It localises to the nucleus. Transcription factor involved in iron metabolism, oxidative stress, surface adhesion, hyphal development and virulence. Functions as a negative regulator of MRS4 expression through the CACCC AFT-type sequence in a gene dose-dependent fashion. Acts as a repressor in flocculation, plastic adhesion, and surface hydrophobicity. The sequence is that of Iron-regulated transcriptional activator AFT2 (AFT2) from Candida albicans (strain SC5314 / ATCC MYA-2876) (Yeast).